Here is a 520-residue protein sequence, read N- to C-terminus: Glycosyl hydrolase family 109 protein 5 (520 aa).

Residues 1 to 27 (MRTFKSLMISLCMGTTLCMCLPQTTTA) form the signal peptide. Residues 77 to 78 (MR), Asp-99, 147 to 150 (WLHH), 167 to 168 (EV), and Asn-196 each bind NAD(+). Substrate contacts are provided by residues Tyr-225, Arg-248, 260 to 263 (YATH), and Tyr-338. Position 260 (Tyr-260) interacts with NAD(+).

The protein belongs to the Gfo/Idh/MocA family. Glycosyl hydrolase 109 subfamily. Requires NAD(+) as cofactor.

In terms of biological role, glycosidase. The protein is Glycosyl hydrolase family 109 protein 5 of Phocaeicola vulgatus (strain ATCC 8482 / DSM 1447 / JCM 5826 / CCUG 4940 / NBRC 14291 / NCTC 11154) (Bacteroides vulgatus).